The chain runs to 318 residues: Holliday junction branch migration complex subunit RuvB (318 aa).

Residues 1 to 168 (MPENLEIRPS…FGYVAKIVDY (168 aa)) are large ATPase domain (RuvB-L). ATP contacts are provided by isoleucine 7, arginine 8, glycine 49, lysine 52, threonine 53, threonine 54, arginine 158, tyrosine 168, and arginine 205. Threonine 53 serves as a coordination point for Mg(2+). A small ATPAse domain (RuvB-S) region spans residues 169–239 (TLEDMIQIIR…IVNKTFDSIG (71 aa)). The head domain (RuvB-H) stretch occupies residues 242–318 (NQGLSQINIE…RDYLLELKTN (77 aa)). DNA is bound by residues arginine 278, lysine 297, and arginine 302.

This sequence belongs to the RuvB family. As to quaternary structure, homohexamer. Forms an RuvA(8)-RuvB(12)-Holliday junction (HJ) complex. HJ DNA is sandwiched between 2 RuvA tetramers; dsDNA enters through RuvA and exits via RuvB. An RuvB hexamer assembles on each DNA strand where it exits the tetramer. Each RuvB hexamer is contacted by two RuvA subunits (via domain III) on 2 adjacent RuvB subunits; this complex drives branch migration. In the full resolvosome a probable DNA-RuvA(4)-RuvB(12)-RuvC(2) complex forms which resolves the HJ.

The protein localises to the cytoplasm. It catalyses the reaction ATP + H2O = ADP + phosphate + H(+). In terms of biological role, the RuvA-RuvB-RuvC complex processes Holliday junction (HJ) DNA during genetic recombination and DNA repair, while the RuvA-RuvB complex plays an important role in the rescue of blocked DNA replication forks via replication fork reversal (RFR). RuvA specifically binds to HJ cruciform DNA, conferring on it an open structure. The RuvB hexamer acts as an ATP-dependent pump, pulling dsDNA into and through the RuvAB complex. RuvB forms 2 homohexamers on either side of HJ DNA bound by 1 or 2 RuvA tetramers; 4 subunits per hexamer contact DNA at a time. Coordinated motions by a converter formed by DNA-disengaged RuvB subunits stimulates ATP hydrolysis and nucleotide exchange. Immobilization of the converter enables RuvB to convert the ATP-contained energy into a lever motion, pulling 2 nucleotides of DNA out of the RuvA tetramer per ATP hydrolyzed, thus driving DNA branch migration. The RuvB motors rotate together with the DNA substrate, which together with the progressing nucleotide cycle form the mechanistic basis for DNA recombination by continuous HJ branch migration. Branch migration allows RuvC to scan DNA until it finds its consensus sequence, where it cleaves and resolves cruciform DNA. The protein is Holliday junction branch migration complex subunit RuvB of Mesomycoplasma hyopneumoniae (strain 232) (Mycoplasma hyopneumoniae).